Here is a 357-residue protein sequence, read N- to C-terminus: UDP-N-acetylglucosamine--N-acetylmuramyl-(pentapeptide) pyrophosphoryl-undecaprenol N-acetylglucosamine transferase (357 aa).

Residues 15–17, Asn124, Arg165, Ser191, and Gln285 each bind UDP-N-acetyl-alpha-D-glucosamine; that span reads TGG.

The protein belongs to the glycosyltransferase 28 family. MurG subfamily.

The protein resides in the cell inner membrane. It carries out the reaction di-trans,octa-cis-undecaprenyl diphospho-N-acetyl-alpha-D-muramoyl-L-alanyl-D-glutamyl-meso-2,6-diaminopimeloyl-D-alanyl-D-alanine + UDP-N-acetyl-alpha-D-glucosamine = di-trans,octa-cis-undecaprenyl diphospho-[N-acetyl-alpha-D-glucosaminyl-(1-&gt;4)]-N-acetyl-alpha-D-muramoyl-L-alanyl-D-glutamyl-meso-2,6-diaminopimeloyl-D-alanyl-D-alanine + UDP + H(+). The protein operates within cell wall biogenesis; peptidoglycan biosynthesis. Functionally, cell wall formation. Catalyzes the transfer of a GlcNAc subunit on undecaprenyl-pyrophosphoryl-MurNAc-pentapeptide (lipid intermediate I) to form undecaprenyl-pyrophosphoryl-MurNAc-(pentapeptide)GlcNAc (lipid intermediate II). The protein is UDP-N-acetylglucosamine--N-acetylmuramyl-(pentapeptide) pyrophosphoryl-undecaprenol N-acetylglucosamine transferase of Microcystis aeruginosa (strain NIES-843 / IAM M-2473).